Reading from the N-terminus, the 224-residue chain is MTNFQVAIDGPASAGKSTIAKILATKLNYVYVDTGAMYRTITLAAKKNGIAYNDEEKIKNLLSQTEIRFEPSTPVQRVFLNDTDVTEEIRSAEVTNNVSVVASFADVRSNLVNRQREIANNNSVIMDGRDIGTTVLPEADVKIFLVASVDERAQRRYKENVAKGMTTDLETLKREIEARDYKDSHRQISPLTQAKDAILVDTTGQSIDDVVAKIANIIENNISF.

10–18 (GPASAGKST) contacts ATP.

The protein belongs to the cytidylate kinase family. Type 1 subfamily.

It localises to the cytoplasm. The enzyme catalyses CMP + ATP = CDP + ADP. It carries out the reaction dCMP + ATP = dCDP + ADP. The polypeptide is Cytidylate kinase (Leuconostoc mesenteroides subsp. mesenteroides (strain ATCC 8293 / DSM 20343 / BCRC 11652 / CCM 1803 / JCM 6124 / NCDO 523 / NBRC 100496 / NCIMB 8023 / NCTC 12954 / NRRL B-1118 / 37Y)).